The sequence spans 1207 residues: DNA-directed RNA polymerase, mitochondrial (1207 aa).

Residues 1-41 (MSALRWTRSAAGLGRVLRSPGPHRPPSEEGTFGGFCSSRRS) constitute a mitochondrion transit peptide. Disordered stretches follow at residues 1 to 48 (MSAL…SPRE) and 82 to 103 (KKVQVDRPPQGHSSRWAQKLEA). PPR repeat units lie at residues 232–266 (TLHMYNTVMLGWARKGSFRELVYVFLMLKDAGLSP) and 267–302 (DLCSYAAALQCMGRRDQDVRTIQRCLKQMMEEGFQP). Positions 702–724 (VPPPRSEAPRPARYQLPPGSTPV) are disordered. Residues 773–1207 (FRGRTYPCPP…QVIRSTYFFS (435 aa)) are mediates interaction with TEFM. Active-site residues include Asp-893, Lys-962, and Asp-1121.

The protein belongs to the phage and mitochondrial RNA polymerase family. As to quaternary structure, homodimer. Component of the mitochondrial transcription initiation complex, composed at least of TFB2M, TFAM and POLRMT. In this complex TFAM recruits POLRMT to the promoter whereas TFB2M induces structural changes in POLRMT to enable promoter opening and trapping of the DNA non-template strand. Upon metabolic stress, forms a complex composed of FOXO3, SIRT3 and mitochondrial RNA polymerase POLRMT; the complex is recruited to mtDNA in a SIRT3-dependent manner. Also forms a complex composed of FOXO3, SIRT3, TFAM and POLRMT. Interacts with TFB1M and TFB2M, leading to the stimulation of transcription. Interacts with TEFM. Interacts with MTRES1.

It is found in the mitochondrion. The catalysed reaction is RNA(n) + a ribonucleoside 5'-triphosphate = RNA(n+1) + diphosphate. DNA-dependent RNA polymerase catalyzes the transcription of mitochondrial DNA into RNA using the four ribonucleoside triphosphates as substrates. Component of the mitochondrial transcription initiation complex, composed at least of TFB2M, TFAM and POLRMT that is required for basal transcription of mitochondrial DNA. In this complex, TFAM recruits POLRMT to a specific promoter whereas TFB2M induces structural changes in POLRMT to enable promoter opening and trapping of the DNA non-template strand. Has DNA primase activity. Catalyzes the synthesis of short RNA primers that are necessary for the initiation of lagging-strand DNA synthesis from the origin of light-strand DNA replication (OriL). The polypeptide is DNA-directed RNA polymerase, mitochondrial (Mus musculus (Mouse)).